A 234-amino-acid chain; its full sequence is Large ribosomal subunit protein uL1 (234 aa).

The protein belongs to the universal ribosomal protein uL1 family. Part of the 50S ribosomal subunit.

Binds directly to 23S rRNA. The L1 stalk is quite mobile in the ribosome, and is involved in E site tRNA release. In terms of biological role, protein L1 is also a translational repressor protein, it controls the translation of the L11 operon by binding to its mRNA. The chain is Large ribosomal subunit protein uL1 from Helicobacter hepaticus (strain ATCC 51449 / 3B1).